A 1021-amino-acid polypeptide reads, in one-letter code: Nonribosomal peptide synthetase asaC (1021 aa).

The segment at 17–418 is adenylation (A) domain; it reads RHHVRTSPNA…ARADNMVKIR (402 aa). One can recognise a Carrier domain in the interval 528–603; it reads KDAGDSVTWL…GLASVIDAGH (76 aa). Residue S563 is modified to O-(pantetheine 4'-phosphoryl)serine. Residues 646-888 are short-chain dehydrogenase/reductase (R) domain; it reads LTGATGFLGT…MIPVDFITTA (243 aa).

This sequence belongs to the NRP synthetase family.

It participates in secondary metabolite biosynthesis. In terms of biological role, nonribosomal peptide synthetase; part of the gene cluster that mediates the biosynthesis of aspergillic acid, a hydroxamic acid-containing pyrazinone with aliphatic side chains that originates from leucine (Leu) and isoleucine (Ile). Aspergillic acid has antibiotic properties and was shown to be lethal to mice. The first step in the pathway is the production of deoxyaspergillic acid via a condensation between the Ile amine and the Leu carboxylic acid, followed by a reductive release from the protein forming the dipeptide aldehyde NH(2)-Leu-Ile-CHO, which could undergo an intermolecular cyclization resulting in a dihydropyrazinone. As the NRPS asaC lacks a condensation domain, it is improbable that it is responsible for condensation of Leu and Ile. One possibility is that asaC acts on a previously condensed dipeptide and functions as a Leu-Ile reductase to yield deoxyaspergillic acid. After asaC forms deoxyaspergillic acid, the cytochrome P450 asaD oxidizes the pyrazinone to the hydroxamic acid-containing bioactive metabolite aspergillic acid. The hydroxylase/desaturase asaB can then convert aspergillic acid to hydroxyaspergillic acid. Both aspergillic acid and hydroxyaspergillic acid can form complexes with iron producing ferriaspergillin analogs. This chain is Nonribosomal peptide synthetase asaC, found in Aspergillus flavus (strain ATCC 200026 / FGSC A1120 / IAM 13836 / NRRL 3357 / JCM 12722 / SRRC 167).